Here is a 167-residue protein sequence, read N- to C-terminus: NADH-quinone oxidoreductase subunit I 1 (167 aa).

4Fe-4S ferredoxin-type domains lie at 52–82 and 98–127; these read LQRD…IEAA and KVYN…HGHG. [4Fe-4S] cluster-binding residues include cysteine 62, cysteine 65, cysteine 68, cysteine 72, cysteine 107, cysteine 110, cysteine 113, and cysteine 117. Positions 148–167 are disordered; that stretch reads PVPPGAKPPSMADEVPAGAH.

Belongs to the complex I 23 kDa subunit family. As to quaternary structure, NDH-1 is composed of 14 different subunits. Subunits NuoA, H, J, K, L, M, N constitute the membrane sector of the complex. The cofactor is [4Fe-4S] cluster.

The protein localises to the cell inner membrane. It catalyses the reaction a quinone + NADH + 5 H(+)(in) = a quinol + NAD(+) + 4 H(+)(out). In terms of biological role, NDH-1 shuttles electrons from NADH, via FMN and iron-sulfur (Fe-S) centers, to quinones in the respiratory chain. The immediate electron acceptor for the enzyme in this species is believed to be ubiquinone. Couples the redox reaction to proton translocation (for every two electrons transferred, four hydrogen ions are translocated across the cytoplasmic membrane), and thus conserves the redox energy in a proton gradient. The protein is NADH-quinone oxidoreductase subunit I 1 of Solibacter usitatus (strain Ellin6076).